Consider the following 332-residue polypeptide: tRNA-dihydrouridine synthase B (332 aa).

FMN is bound by residues 16-18 (PMA) and glutamine 70. Catalysis depends on cysteine 100, which acts as the Proton donor. FMN-binding positions include lysine 139, 200 to 202 (NGD), and 224 to 225 (GR).

The protein belongs to the Dus family. DusB subfamily. Requires FMN as cofactor.

It catalyses the reaction a 5,6-dihydrouridine in tRNA + NAD(+) = a uridine in tRNA + NADH + H(+). The catalysed reaction is a 5,6-dihydrouridine in tRNA + NADP(+) = a uridine in tRNA + NADPH + H(+). Functionally, catalyzes the synthesis of 5,6-dihydrouridine (D), a modified base found in the D-loop of most tRNAs, via the reduction of the C5-C6 double bond in target uridines. The polypeptide is tRNA-dihydrouridine synthase B (Xanthomonas campestris pv. campestris (strain ATCC 33913 / DSM 3586 / NCPPB 528 / LMG 568 / P 25)).